A 173-amino-acid chain; its full sequence is Translation initiation factor IF-3 (173 aa).

It belongs to the IF-3 family. In terms of assembly, monomer.

It is found in the cytoplasm. IF-3 binds to the 30S ribosomal subunit and shifts the equilibrium between 70S ribosomes and their 50S and 30S subunits in favor of the free subunits, thus enhancing the availability of 30S subunits on which protein synthesis initiation begins. This chain is Translation initiation factor IF-3, found in Bacillus subtilis (strain 168).